A 463-amino-acid chain; its full sequence is Glycine--tRNA ligase (463 aa).

Residues R98 and E174 each coordinate substrate. Residues 206–208 (RNE), 216–221 (FRTREF), 290–291 (EL), and 334–337 (GADR) contribute to the ATP site. 221–225 (FEQME) contacts substrate. Position 330 to 334 (330 to 334 (EPSLG)) interacts with substrate.

Belongs to the class-II aminoacyl-tRNA synthetase family. Homodimer.

It localises to the cytoplasm. It carries out the reaction tRNA(Gly) + glycine + ATP = glycyl-tRNA(Gly) + AMP + diphosphate. In terms of biological role, catalyzes the attachment of glycine to tRNA(Gly). The polypeptide is Glycine--tRNA ligase (Staphylococcus aureus (strain Mu50 / ATCC 700699)).